A 542-amino-acid chain; its full sequence is Glutamyl-tRNA(Gln) amidotransferase subunit B, mitochondrial (542 aa).

A mitochondrion-targeting transit peptide spans 1–66 (MRVFRRFYQV…PNSHTSFFDI (66 aa)).

It belongs to the GatB/GatE family. GatB subfamily. In terms of assembly, subunit of the heterotrimeric GatFAB amidotransferase (AdT) complex, composed of A, B and F subunits.

The protein resides in the mitochondrion. The catalysed reaction is L-glutamyl-tRNA(Gln) + L-glutamine + ATP + H2O = L-glutaminyl-tRNA(Gln) + L-glutamate + ADP + phosphate + H(+). Functionally, allows the formation of correctly charged Gln-tRNA(Gln) through the transamidation of misacylated Glu-tRNA(Gln) in the mitochondria. The reaction takes place in the presence of glutamine and ATP through an activated gamma-phospho-Glu-tRNA(Gln). This is Glutamyl-tRNA(Gln) amidotransferase subunit B, mitochondrial from Zygosaccharomyces rouxii (strain ATCC 2623 / CBS 732 / NBRC 1130 / NCYC 568 / NRRL Y-229).